The following is a 532-amino-acid chain: Telomerase Cajal body protein 1 (532 aa).

The disordered stretch occupies residues 1–53 (MKTSEERLLAPDSLPPDLAPAPVPQGSPAEKNTDFEPVPPPCGGDDQPQLATD). Positions 13 to 25 (SLPPDLAPAPVPQ) are enriched in pro residues. Residues S27, S61, and S83 each carry the phosphoserine modification. Residues 80 to 122 (SELSPGIEEQDVSEHASLPGEETNLPELESGEATEGVSEERAE) form a disordered region. 6 WD repeats span residues 151 to 190 (RSEN…YSEQ), 206 to 251 (EGDT…LRAS), 256 to 297 (NHLD…RDCE), 307 to 348 (GQSG…ALLG), 349 to 389 (GHQG…HLLW), and 395 to 434 (VTTN…SDDS). Residue T474 is modified to Phosphothreonine. The residue at position 476 (S476) is a Phosphoserine. Positions 510-532 (DPSSPVDDQDEKGQRRTEAVGMS) are disordered. A compositionally biased stretch (basic and acidic residues) spans 520-532 (EKGQRRTEAVGMS).

The protein belongs to the TCAB1 family. As to quaternary structure, component of the telomerase holoenzyme complex composed of one molecule of TERT, one molecule of WRAP53/TCAB1, two molecules of H/ACA ribonucleoprotein complex subunits DKC1, NOP10, NHP2 and GAR1, and a telomerase RNA template component (TERC). The telomerase holoenzyme complex is associated with TEP1, SMG6/EST1A and POT1. Interacts with the chaperonin-containing T-complex (TRiC) complex; which mediates the folding of WRAP53/TCAB1. Interacts with COIL. Interacts with SMN1. Interacts with RNF8. Interacts with histone H2AX. Post-translationally, phosphorylated at Ser-61 by ATM in response to DNA damage, promoting its interaction with histone H2AX and localization to sites of DNA double-strand breaks.

The protein resides in the nucleus. It is found in the cajal body. Its subcellular location is the chromosome. The protein localises to the telomere. Its function is as follows. RNA chaperone that plays a key role in telomere maintenance and RNA localization to Cajal bodies. Specifically recognizes and binds the Cajal body box (CAB box) present in both small Cajal body RNAs (scaRNAs) and telomerase RNA template component (TERC). Essential component of the telomerase holoenzyme complex, a ribonucleoprotein complex essential for the replication of chromosome termini that elongates telomeres in most eukaryotes. In the telomerase holoenzyme complex, required to stimulate the catalytic activity of the complex. Acts by specifically binding the CAB box of the TERC RNA and controlling the folding of the CR4/CR5 region of the TERC RNA, a critical step for telomerase activity. In addition, also controls telomerase holoenzyme complex localization to Cajal body. During S phase, required for delivery of TERC to telomeres during S phase and for telomerase activity. In addition to its role in telomere maintenance, also required for Cajal body formation, probably by mediating localization of scaRNAs to Cajal bodies. Also plays a role in DNA repair: phosphorylated by ATM in response to DNA damage and relocalizes to sites of DNA double-strand breaks to promote the repair of DNA double-strand breaks. Acts by recruiting the ubiquitin ligase RNF8 to DNA breaks and promote both homologous recombination (HR) and non-homologous end joining (NHEJ). This is Telomerase Cajal body protein 1 from Mus musculus (Mouse).